Here is a 767-residue protein sequence, read N- to C-terminus: Transducin-like enhancer protein 1 (767 aa).

Disordered stretches follow at residues 1–26 (MFPQ…PPQS) and 200–346 (ADAE…TSAS). Basic and acidic residues-rich tracts occupy residues 200-209 (ADAEHRERDP), 235-255 (RKTE…RSED), and 277-289 (NGVD…RKDP). A CCN domain region spans residues 212-274 (SCLTLPNGER…SPHSVHSYSS (63 aa)). The span at 294–306 (PNSMTSSSSVSPS) shows a compositional bias: low complexity. Positions 324-346 (LKSSTPNSQSDLNTPGPSGTSAS) are enriched in polar residues. WD repeat units follow at residues 467–498 (GIPR…HVYT), 525–555 (NRDN…SIWD), 569–599 (SSAP…VVWD), 611–641 (GHTD…RCWD), 693–723 (LHES…NAWR), and 734–764 (KESS…TVYE).

The protein belongs to the WD repeat Groucho/TLE family. Post-translationally, ubiquitinated by XIAP/BIRC4. As to expression, abundantly expressed in brain, lung, testis and ovary in comparison with liver, heart, kidney and spleen. Ubiquitously expressed in the developing embryo. Present in unfertilized and fertilized eggs.

The protein resides in the nucleus. Its function is as follows. Nuclear effector molecule. This Xenopus laevis (African clawed frog) protein is Transducin-like enhancer protein 1 (esg1).